A 276-amino-acid chain; its full sequence is Large ribosomal subunit protein uL2c (276 aa).

The tract at residues 221–276 (RGSVMNPVDHPHGGGEGRAPIGRSRPVTPWGKPALGQKTRKPKKQSNKLILRKRKK) is disordered. The span at 258 to 276 (KTRKPKKQSNKLILRKRKK) shows a compositional bias: basic residues.

Belongs to the universal ribosomal protein uL2 family. As to quaternary structure, part of the 50S ribosomal subunit.

Its subcellular location is the plastid. The protein resides in the chloroplast. The sequence is that of Large ribosomal subunit protein uL2c (rpl2) from Stigeoclonium helveticum (Green alga).